The sequence spans 688 residues: Acyl-CoA synthetase short-chain family member B, mitochondrial (688 aa).

This sequence belongs to the ATP-dependent AMP-binding enzyme family.

The protein localises to the mitochondrion. It carries out the reaction acetate + ATP + CoA = acetyl-CoA + AMP + diphosphate. Its function is as follows. Activates acetate so that it can be used for lipid synthesis or for energy generation. The chain is Acyl-CoA synthetase short-chain family member B, mitochondrial (aslB) from Dictyostelium discoideum (Social amoeba).